A 255-amino-acid polypeptide reads, in one-letter code: tRNA (guanine-N(1)-)-methyltransferase (255 aa).

S-adenosyl-L-methionine is bound by residues Gly113 and 133-138 (IGDYVL).

The protein belongs to the RNA methyltransferase TrmD family. In terms of assembly, homodimer.

The protein localises to the cytoplasm. It carries out the reaction guanosine(37) in tRNA + S-adenosyl-L-methionine = N(1)-methylguanosine(37) in tRNA + S-adenosyl-L-homocysteine + H(+). Specifically methylates guanosine-37 in various tRNAs. In Enterobacter sp. (strain 638), this protein is tRNA (guanine-N(1)-)-methyltransferase.